The chain runs to 237 residues: Thiamine-phosphate synthase (237 aa).

Residues 57–61 and Asn98 each bind 4-amino-2-methyl-5-(diphosphooxymethyl)pyrimidine; that span reads QLRDK. Asp99 and Asp118 together coordinate Mg(2+). 4-amino-2-methyl-5-(diphosphooxymethyl)pyrimidine is bound at residue Ser136. 162–164 is a 2-[(2R,5Z)-2-carboxy-4-methylthiazol-5(2H)-ylidene]ethyl phosphate binding site; that stretch reads TPT. Lys165 contacts 4-amino-2-methyl-5-(diphosphooxymethyl)pyrimidine. Gly193 contacts 2-[(2R,5Z)-2-carboxy-4-methylthiazol-5(2H)-ylidene]ethyl phosphate.

Belongs to the thiamine-phosphate synthase family. Requires Mg(2+) as cofactor.

It catalyses the reaction 2-[(2R,5Z)-2-carboxy-4-methylthiazol-5(2H)-ylidene]ethyl phosphate + 4-amino-2-methyl-5-(diphosphooxymethyl)pyrimidine + 2 H(+) = thiamine phosphate + CO2 + diphosphate. The enzyme catalyses 2-(2-carboxy-4-methylthiazol-5-yl)ethyl phosphate + 4-amino-2-methyl-5-(diphosphooxymethyl)pyrimidine + 2 H(+) = thiamine phosphate + CO2 + diphosphate. The catalysed reaction is 4-methyl-5-(2-phosphooxyethyl)-thiazole + 4-amino-2-methyl-5-(diphosphooxymethyl)pyrimidine + H(+) = thiamine phosphate + diphosphate. The protein operates within cofactor biosynthesis; thiamine diphosphate biosynthesis; thiamine phosphate from 4-amino-2-methyl-5-diphosphomethylpyrimidine and 4-methyl-5-(2-phosphoethyl)-thiazole: step 1/1. Condenses 4-methyl-5-(beta-hydroxyethyl)thiazole monophosphate (THZ-P) and 2-methyl-4-amino-5-hydroxymethyl pyrimidine pyrophosphate (HMP-PP) to form thiamine monophosphate (TMP). The sequence is that of Thiamine-phosphate synthase from Mycolicibacterium gilvum (strain PYR-GCK) (Mycobacterium gilvum (strain PYR-GCK)).